The chain runs to 912 residues: E3 ubiquitin-protein ligase HACE1 (912 aa).

7 ANK repeats span residues 23–55 (LPEDNETAVYTLMPMVMADQHRSVLELLSNSKF), 64–93 (VKRSLLHIAANCGSVECLVLLLKRGADPNY), 97–126 (SGCTPLHLAARNGQKKCMSKLLEYNADVNI), 130–159 (EGLTAIHWLAVNGRTELLHDLVQHVTNVDV), 163–192 (MGQTALHVACQNGHKTTVLCLLDSGADINR), 196–226 (SGATPLYFACSHGQRDTAQILLLRGAKYLPD), and 228–253 (NGVTPLDLCVQGGYGETCDILIQHHP). Residues 577–912 (NCEKLKQGIA…HCGSYGYTMA (336 aa)) enclose the HECT domain. Cys-879 acts as the Glycyl thioester intermediate in catalysis.

The protein resides in the golgi apparatus. It localises to the golgi stack membrane. The protein localises to the cytoplasm. Its subcellular location is the endoplasmic reticulum. The catalysed reaction is S-ubiquitinyl-[E2 ubiquitin-conjugating enzyme]-L-cysteine + [acceptor protein]-L-lysine = [E2 ubiquitin-conjugating enzyme]-L-cysteine + N(6)-ubiquitinyl-[acceptor protein]-L-lysine.. The protein operates within protein modification; protein ubiquitination. Functionally, E3 ubiquitin-protein ligase involved in Golgi membrane fusion and regulation of small GTPases. Acts as a regulator of Golgi membrane dynamics during the cell cycle: recruited to Golgi membrane by Rab proteins and regulates postmitotic Golgi membrane fusion. Acts by mediating ubiquitination during mitotic Golgi disassembly, ubiquitination serving as a signal for Golgi reassembly later, after cell division. The chain is E3 ubiquitin-protein ligase HACE1 (hace1) from Xenopus tropicalis (Western clawed frog).